The chain runs to 254 residues: tRNA uridine(34) hydroxylase (254 aa).

Positions Gln123–Ser217 constitute a Rhodanese domain. Cys177 (cysteine persulfide intermediate) is an active-site residue.

It belongs to the TrhO family.

The enzyme catalyses uridine(34) in tRNA + AH2 + O2 = 5-hydroxyuridine(34) in tRNA + A + H2O. Functionally, catalyzes oxygen-dependent 5-hydroxyuridine (ho5U) modification at position 34 in tRNAs. The polypeptide is tRNA uridine(34) hydroxylase (Legionella pneumophila (strain Lens)).